An 830-amino-acid chain; its full sequence is uncharacterized protein (830 aa).

3 disordered regions span residues 1 to 28, 70 to 147, and 186 to 210; these read MGVQ…DSIC, RRAN…GNFA, and AASP…SKSL. A compositionally biased stretch (polar residues) spans 10-27; it reads NSKNWLRQPDQQPIQDSI. 2 stretches are compositionally biased toward low complexity: residues 100–130 and 186–199; these read QKSS…SIQS and AASP…ASTS. The span at 200-210 shows a compositional bias: polar residues; the sequence is ENLTPTSSKSL. A run of 10 helical transmembrane segments spans residues 505–525, 529–549, 551–571, 584–604, 622–642, 659–679, 691–711, 715–735, 740–760, and 802–822; these read WLVA…VYGG, DMLI…YINP, FFLF…FLGR, FCFA…YVVF, MLYA…GSAL, IIAV…LSLL, IQMF…LHFG, ISSA…SHFI, FAVV…AQGG, and IAIG…PFFG.

Belongs to the ThrE exporter (TC 2.A.79) family.

Its subcellular location is the cell membrane. It is found in the cell tip. This is an uncharacterized protein from Schizosaccharomyces pombe (strain 972 / ATCC 24843) (Fission yeast).